The sequence spans 149 residues: Deoxyuridine 5'-triphosphate nucleotidohydrolase (149 aa).

Residues 68–70 (RSG), N81, 85–87 (LID), and M95 each bind substrate.

Belongs to the dUTPase family. Mg(2+) serves as cofactor.

It carries out the reaction dUTP + H2O = dUMP + diphosphate + H(+). The protein operates within pyrimidine metabolism; dUMP biosynthesis; dUMP from dCTP (dUTP route): step 2/2. Functionally, this enzyme is involved in nucleotide metabolism: it produces dUMP, the immediate precursor of thymidine nucleotides and it decreases the intracellular concentration of dUTP so that uracil cannot be incorporated into DNA. This chain is Deoxyuridine 5'-triphosphate nucleotidohydrolase, found in Methylibium petroleiphilum (strain ATCC BAA-1232 / LMG 22953 / PM1).